Reading from the N-terminus, the 335-residue chain is Probable cytosolic iron-sulfur protein assembly protein Ciao1 (335 aa).

7 WD repeats span residues 12–51, 57–96, 101–140, 146–185, 192–231, 250–289, and 301–335; these read GHKG…WSTK, GHKR…FECN, GHEN…EFEC, PHTQ…NDWD, SHTS…NTAG, QHSR…KPDE, and AHDQ…KVSE.

It belongs to the WD repeat CIA1 family.

Essential component of the cytosolic iron-sulfur (Fe/S) protein assembly machinery. Required for the maturation of extramitochondrial Fe/S proteins. This chain is Probable cytosolic iron-sulfur protein assembly protein Ciao1, found in Drosophila simulans (Fruit fly).